The sequence spans 429 residues: Enolase (429 aa).

A (2R)-2-phosphoglycerate-binding site is contributed by glutamine 163. Catalysis depends on glutamate 205, which acts as the Proton donor. 3 residues coordinate Mg(2+): aspartate 242, glutamate 287, and aspartate 314. (2R)-2-phosphoglycerate is bound by residues lysine 339, arginine 368, serine 369, and lysine 390. Lysine 339 serves as the catalytic Proton acceptor.

Belongs to the enolase family. Requires Mg(2+) as cofactor.

The protein resides in the cytoplasm. Its subcellular location is the secreted. It is found in the cell surface. The catalysed reaction is (2R)-2-phosphoglycerate = phosphoenolpyruvate + H2O. The protein operates within carbohydrate degradation; glycolysis; pyruvate from D-glyceraldehyde 3-phosphate: step 4/5. Its function is as follows. Catalyzes the reversible conversion of 2-phosphoglycerate (2-PG) into phosphoenolpyruvate (PEP). It is essential for the degradation of carbohydrates via glycolysis. This is Enolase from Salinibacter ruber (strain DSM 13855 / M31).